Consider the following 519-residue polypeptide: Putative glucosylceramidase 4 (519 aa).

Positions 1–24 (MILNISVSLLIFLAFYGFSSDAKS) are cleaved as a signal peptide. The active-site Proton donor is the Glu-256. Glu-361 (nucleophile) is an active-site residue.

Belongs to the glycosyl hydrolase 30 family.

It catalyses the reaction a beta-D-glucosylceramide + H2O = an N-acyl-sphingoid base + D-glucose. The enzyme catalyses a beta-D-glucosyl-(1&lt;-&gt;1')-N-acylsphing-4-enine + H2O = an N-acylsphing-4-enine + D-glucose. The catalysed reaction is an N-acyl-1-beta-D-glucosyl-15-methylhexadecasphing-4-enine + H2O = an N-acyl-15-methylhexadecasphing-4-enine + D-glucose. It participates in lipid metabolism; sphingolipid metabolism. Functionally, glucosylceramidase that catalyzes the hydrolysis of glucosylceramides into free ceramides and glucose. C.elegans contains specific sphingoid bases, which are unique or different in structure compared to the sphingoid bases found in other animals. Two examples of these distinctive compounds are: 15-methylhexadecasphinganine and 15-methylhexadecasphing-4-enine. This chain is Putative glucosylceramidase 4 (gba-4), found in Caenorhabditis elegans.